We begin with the raw amino-acid sequence, 95 residues long: Co-chaperonin GroES (95 aa).

Belongs to the GroES chaperonin family. As to quaternary structure, heptamer of 7 subunits arranged in a ring. Interacts with the chaperonin GroEL.

It is found in the cytoplasm. Functionally, together with the chaperonin GroEL, plays an essential role in assisting protein folding. The GroEL-GroES system forms a nano-cage that allows encapsulation of the non-native substrate proteins and provides a physical environment optimized to promote and accelerate protein folding. GroES binds to the apical surface of the GroEL ring, thereby capping the opening of the GroEL channel. The sequence is that of Co-chaperonin GroES from Rickettsia felis (strain ATCC VR-1525 / URRWXCal2) (Rickettsia azadi).